A 372-amino-acid chain; its full sequence is Protein RecA (372 aa).

77 to 84 (GPESSGKT) provides a ligand contact to ATP.

Belongs to the RecA family.

The protein localises to the cytoplasm. Functionally, can catalyze the hydrolysis of ATP in the presence of single-stranded DNA, the ATP-dependent uptake of single-stranded DNA by duplex DNA, and the ATP-dependent hybridization of homologous single-stranded DNAs. It interacts with LexA causing its activation and leading to its autocatalytic cleavage. The chain is Protein RecA from Corynebacterium diphtheriae (strain ATCC 700971 / NCTC 13129 / Biotype gravis).